The sequence spans 119 residues: Ribosome-binding factor A (119 aa).

It belongs to the RbfA family. Monomer. Binds 30S ribosomal subunits, but not 50S ribosomal subunits or 70S ribosomes.

The protein localises to the cytoplasm. In terms of biological role, one of several proteins that assist in the late maturation steps of the functional core of the 30S ribosomal subunit. Associates with free 30S ribosomal subunits (but not with 30S subunits that are part of 70S ribosomes or polysomes). Required for efficient processing of 16S rRNA. May interact with the 5'-terminal helix region of 16S rRNA. This is Ribosome-binding factor A from Citrifermentans bemidjiense (strain ATCC BAA-1014 / DSM 16622 / JCM 12645 / Bem) (Geobacter bemidjiensis).